Reading from the N-terminus, the 148-residue chain is Wound-induced proteinase inhibitor 2 (148 aa).

A signal peptide spans methionine 1–alanine 25. One copy of the 1; trypsin-inhibitory repeat lies at lysine 26 to arginine 81. 8 disulfide bridges follow: cysteine 28–cysteine 116, cysteine 32–cysteine 112, cysteine 40–cysteine 122, cysteine 52–cysteine 89, cysteine 55–cysteine 73, cysteine 56–cysteine 85, cysteine 62–cysteine 98, and cysteine 115–cysteine 133. The stretch at asparagine 83–lysine 141 is one 2; chymotrypsin-inhibitory repeat.

It belongs to the protease inhibitor I20 (potato type II proteinase inhibitor) family.

It is found in the secreted. Its function is as follows. Potent inhibitor of both trypsin and chymotrypsin. The polypeptide is Wound-induced proteinase inhibitor 2 (Solanum lycopersicum (Tomato)).